We begin with the raw amino-acid sequence, 743 residues long: Dolichyl-phosphooligosaccharide-protein glycotransferase 2 (743 aa).

At 1-7 the chain is on the cytoplasmic side; the sequence is MKIDKRL. The chain crosses the membrane as a helical span at residues 8 to 28; the sequence is MVIVAIATLFRMIPFRLKYLV. The short motif at 29-31 is the DXD motif 1 element; the sequence is GSD. Topologically, residues 29–91 are extracellular; it reads GSDPYFHLAY…FSFLGISLYT (63 aa). Mn(2+) is bound at residue Asp-31. A helical transmembrane segment spans residues 92–112; the sequence is AFRVTPVIFGVLTVVFFYLSL. Topologically, residues 113 to 119 are cytoplasmic; that stretch reads KKLYNRD. The helical transmembrane segment at 120 to 140 threads the bilayer; it reads VAFIVGLFLGVNYGHIFRSMA. Residues 141–144 lie on the Extracellular side of the membrane; it reads NYYR. 2 residues coordinate Mn(2+): Arg-144 and Asp-146. Positions 144–146 match the DXD motif 2 motif; it reads RGD. The helical transmembrane segment at 145 to 165 threads the bilayer; that stretch reads GDNYMLFWYSVALLGIALGLK. Over 166–170 the chain is Cytoplasmic; sequence TRSKY. The next 2 membrane-spanning stretches (helical) occupy residues 171-191 and 192-212; these read RYLF…FWQA and YYPI…YAYL. At 213–216 the chain is on the cytoplasmic side; sequence KSPK. The chain crosses the membrane as a helical span at residues 217–237; the sequence is LFLDSILIVLSTGLGVLIANI. Residues 238–272 are Extracellular-facing; the sequence is LGDKVGYGMLGYTDWMGKKVAETFGLEFGFIKDAY. Residues 273-293 traverse the membrane as a helical segment; it reads LLIHVKYLLPLSLVFLGFLII. The Cytoplasmic portion of the chain corresponds to 294 to 302; it reads TKKLNPKIK. Residues 303–323 traverse the membrane as a helical segment; the sequence is VGVLVGGSILAFIVMLVKFPA. Topologically, residues 324–345 are extracellular; sequence LKDLSTGFGTFREVPISETLPP. The TIXE motif signature appears at 333 to 336; the sequence is TFRE. Residues 346-366 form a helical membrane-spanning segment; the sequence is TLDDLWRAYNIAIFLAALYIL. Residues 367-373 lie on the Cytoplasmic side of the membrane; the sequence is RLRKIRS. Residues 374-391 traverse the membrane as a helical segment; the sequence is GDAILLGYVITSLWMLRY. The Extracellular portion of the chain corresponds to 392-394; it reads WTR. Arg-394 is an a glycophospholipid binding site. A helical transmembrane segment spans residues 395-415; it reads FLFTAAPAVAFLSGIGVYELT. The Cytoplasmic portion of the chain corresponds to 416–424; that stretch reads RRIKENKIR. Residues 425-445 traverse the membrane as a helical segment; the sequence is ITSLGVVILLSSAFSLGEVYS. Residues 446–743 are Extracellular-facing; sequence VKPFMNENWE…LDRGIVRVKN (298 aa). The interval 474–476 is interacts with target acceptor peptide in protein substrate; that stretch reads WWD. The WWDYG motif signature appears at 474 to 478; that stretch reads WWDWG. Positions 526–533 match the DK motif motif; sequence DILKFEAI.

Belongs to the STT3 family. The cofactor is Mn(2+). It depends on Mg(2+) as a cofactor.

The protein localises to the cell membrane. It carries out the reaction an archaeal dolichyl phosphooligosaccharide + [protein]-L-asparagine = an archaeal dolichyl phosphate + a glycoprotein with the oligosaccharide chain attached by N-beta-D-glycosyl linkage to a protein L-asparagine.. Its pathway is protein modification; protein glycosylation. Functionally, oligosaccharyl transferase (OST) that catalyzes the initial transfer of a defined glycan (ManNAcXyl(2)GlcAMan(2)GalNAc in P.furiosus) from the lipid carrier dolichol-monophosphate to an asparagine residue within an Asn-X-Ser/Thr consensus motif in nascent polypeptide chains, the first step in protein N-glycosylation. The chain is Dolichyl-phosphooligosaccharide-protein glycotransferase 2 (aglB2) from Pyrococcus furiosus (strain ATCC 43587 / DSM 3638 / JCM 8422 / Vc1).